Here is an 88-residue protein sequence, read N- to C-terminus: MATKKGASSSSNGRDSEAKRLGVKRFGGQQVKAGEILIRQRGTKFHPGVNVGRGGDDTLFALKAGAVQFSTKRNRRLVNIVEDEAVEA.

The segment covering 1–13 (MATKKGASSSSNG) has biased composition (polar residues). A disordered region spans residues 1–23 (MATKKGASSSSNGRDSEAKRLGV).

Belongs to the bacterial ribosomal protein bL27 family.

The sequence is that of Large ribosomal subunit protein bL27 from Corynebacterium urealyticum (strain ATCC 43042 / DSM 7109).